Reading from the N-terminus, the 171-residue chain is Adenine phosphoribosyltransferase (171 aa).

It belongs to the purine/pyrimidine phosphoribosyltransferase family. As to quaternary structure, homodimer.

Its subcellular location is the cytoplasm. The enzyme catalyses AMP + diphosphate = 5-phospho-alpha-D-ribose 1-diphosphate + adenine. Its pathway is purine metabolism; AMP biosynthesis via salvage pathway; AMP from adenine: step 1/1. Its function is as follows. Catalyzes a salvage reaction resulting in the formation of AMP, that is energically less costly than de novo synthesis. The polypeptide is Adenine phosphoribosyltransferase (Solidesulfovibrio magneticus (strain ATCC 700980 / DSM 13731 / RS-1) (Desulfovibrio magneticus)).